Here is a 908-residue protein sequence, read N- to C-terminus: Metabotropic glutamate receptor 8 (908 aa).

An N-terminal signal peptide occupies residues 1–33 (MVCEGKRSASCPCFFLLTAKFYWILTMMQRTHS). Over 34–583 (QEYAHSIRVD…IIKLEWHSPW (550 aa)) the chain is Extracellular. Cysteine 64 and cysteine 106 are oxidised to a cystine. Residue asparagine 95 is glycosylated (N-linked (GlcNAc...) asparagine). Residues serine 156, 177–179 (AST), and tyrosine 227 contribute to the L-glutamate site. Cystine bridges form between cysteine 246–cysteine 534, cysteine 369–cysteine 384, cysteine 424–cysteine 431, cysteine 516–cysteine 535, cysteine 520–cysteine 538, cysteine 541–cysteine 553, and cysteine 556–cysteine 569. Asparagine 298 is a glycosylation site (N-linked (GlcNAc...) asparagine). Residue aspartate 309 coordinates L-glutamate. An L-glutamate-binding site is contributed by lysine 401. Residues asparagine 452 and asparagine 480 are each glycosylated (N-linked (GlcNAc...) asparagine). An N-linked (GlcNAc...) asparagine glycan is attached at asparagine 565. A helical transmembrane segment spans residues 584 to 608 (AVVPVFVAILGIIATTFVIVTFVRY). Residues 609–620 (NDTPIVRASGRE) lie on the Cytoplasmic side of the membrane. Residues 621–641 (LSYVLLTGIFLCYSITFLMIA) form a helical membrane-spanning segment. Residues 642–647 (APDTII) lie on the Extracellular side of the membrane. A helical transmembrane segment spans residues 648–668 (CSFRRVFLGLGMCFSYAALLT). Over 669 to 695 (KTNRIHRIFEQGKKSVTAPKFISPASQ) the chain is Cytoplasmic. Residues 696-716 (LVITFSLISVQLLGVFVWFVV) traverse the membrane as a helical segment. Over 717–746 (DPPHIIIDYGEQRTLDPEKARGVLKCDISD) the chain is Extracellular. The helical transmembrane segment at 747 to 768 (LSLICSLGYSILLMVTCTVYAI) threads the bilayer. Topologically, residues 769–781 (KTRGVPETFNEAK) are cytoplasmic. A helical membrane pass occupies residues 782–803 (PIGFTMYTTCIIWLAFIPIFFG). Residues 804-818 (TAQSAEKMYIQTTTL) are Extracellular-facing. Residues 819–843 (TVSMSLSASVSLGMLYMPKVYIIIF) form a helical membrane-spanning segment. Topologically, residues 844–908 (HPEQNVQKRK…TYISYSNHSI (65 aa)) are cytoplasmic. Residue lysine 882 forms a Glycyl lysine isopeptide (Lys-Gly) (interchain with G-Cter in SUMO1) linkage.

It belongs to the G-protein coupled receptor 3 family. In terms of assembly, interacts with PICK1.

It is found in the cell membrane. G-protein coupled receptor for glutamate. Ligand binding causes a conformation change that triggers signaling via guanine nucleotide-binding proteins (G proteins) and modulates the activity of down-stream effectors, such as adenylate cyclase. Signaling inhibits adenylate cyclase activity. The chain is Metabotropic glutamate receptor 8 (GRM8) from Homo sapiens (Human).